The chain runs to 212 residues: Peptide methionine sulfoxide reductase MsrA (212 aa).

Cys52 is a catalytic residue.

Belongs to the MsrA Met sulfoxide reductase family.

The catalysed reaction is L-methionyl-[protein] + [thioredoxin]-disulfide + H2O = L-methionyl-(S)-S-oxide-[protein] + [thioredoxin]-dithiol. The enzyme catalyses [thioredoxin]-disulfide + L-methionine + H2O = L-methionine (S)-S-oxide + [thioredoxin]-dithiol. Has an important function as a repair enzyme for proteins that have been inactivated by oxidation. Catalyzes the reversible oxidation-reduction of methionine sulfoxide in proteins to methionine. The polypeptide is Peptide methionine sulfoxide reductase MsrA (Salmonella arizonae (strain ATCC BAA-731 / CDC346-86 / RSK2980)).